Consider the following 447-residue polypeptide: GTPase Der (447 aa).

EngA-type G domains lie at 4-165 (KIIA…PEEE) and 180-357 (LQIV…KIWN). GTP-binding positions include 10–17 (GRPNVGKS), 57–61 (DTPGL), 119–122 (NKCE), 186–193 (GRPNAGKS), 233–237 (DTAGL), and 298–301 (NKWD). The 86-residue stretch at 358 to 443 (KKIATSKLNE…PIRFTYVKTK (86 aa)) folds into the KH-like domain.

The protein belongs to the TRAFAC class TrmE-Era-EngA-EngB-Septin-like GTPase superfamily. EngA (Der) GTPase family. Associates with the 50S ribosomal subunit.

GTPase that plays an essential role in the late steps of ribosome biogenesis. In Rickettsia akari (strain Hartford), this protein is GTPase Der.